We begin with the raw amino-acid sequence, 410 residues long: MDSFSQKLNTYAQLAVEVGVNVQKGQYVVVNASTDVRDFVRLIVKHAYEKGAKNVTVNWQDDEVAKLKYELAPFEAFEEYPEWEAKGREELAKNGAAFISVVSSNPDLLKGIDSKRIAAFQKAAGKALHTYRQYIQSDKVSWTVVGAASAGWAHKVFPGKSEEEAIHLLWEEIFKATRVNEDNPVQAWINHDQNLHEKVDHLNERHYAALHYQAEGTDLTIKLPRKHVWAGAGSVNESGHEFMANMPTEEVFTLPQKDGVDGVVSSTKPLSYGGNIIENFTLTFENGRIVDIKAEKGEDILKELVETDEGSHYLGEVALVPYDSPISQSNILFYNTLFDENASNHLAIGSAYAFNIEGGKQMSREELVKEGLNESITHVDFMIGSKDMNIDGITADGKREPIFRNGNWAF.

6 residues coordinate a divalent metal cation: E250, E316, E340, H345, H378, and D380.

Belongs to the peptidase M29 family. The cofactor is Co(2+). It depends on Zn(2+) as a cofactor. Mg(2+) is required as a cofactor.

Its function is as follows. Metal-dependent exopeptidase. This chain is Aminopeptidase AmpS (ampS), found in Bacillus subtilis (strain 168).